The sequence spans 159 residues: Large ribosomal subunit protein uL11 (159 aa).

The interval 1–26 is disordered; that stretch reads MAGTIEVLVPGGKANPGPPLGPELGP.

This sequence belongs to the universal ribosomal protein uL11 family. In terms of assembly, part of the ribosomal stalk of the 50S ribosomal subunit. Interacts with L10 and the large rRNA to form the base of the stalk. L10 forms an elongated spine to which L12 dimers bind in a sequential fashion forming a multimeric L10(L12)X complex.

Functionally, forms part of the ribosomal stalk which helps the ribosome interact with GTP-bound translation factors. The protein is Large ribosomal subunit protein uL11 of Haloferax volcanii (strain ATCC 29605 / DSM 3757 / JCM 8879 / NBRC 14742 / NCIMB 2012 / VKM B-1768 / DS2) (Halobacterium volcanii).